The chain runs to 405 residues: Cytochrome b (405 aa).

A helical transmembrane segment spans residues 44–64 (FGSLAGIAMIIMIATGIFLAM). Residues histidine 94 and histidine 108 each coordinate heme b. A run of 8 helical transmembrane segments spans residues 97 to 117 (GASM…YYGS), 124 to 144 (VLWW…FMGY), 163 to 183 (FSAI…GFSV), 191 to 211 (FFSL…LHMW), 245 to 265 (FGLG…PNFF), 303 to 323 (LGGV…PWLD), 338 to 358 (GFFW…AMPA), and 368 to 388 (LATI…GWFE). Heme b contacts are provided by histidine 195 and histidine 209.

Belongs to the cytochrome b family. The main subunits of complex b-c1 are: cytochrome b, cytochrome c1 and the Rieske protein. Heme b serves as cofactor.

It is found in the cell membrane. Component of the ubiquinol-cytochrome c reductase complex (complex III or cytochrome b-c1 complex), which is a respiratory chain that generates an electrochemical potential coupled to ATP synthesis. This Rhodospirillum rubrum protein is Cytochrome b (petB).